The sequence spans 535 residues: Alcohol O-acetyltransferase 2 (535 aa).

Residues 19–36 (GHARRMGHLENYFAVLSR) form a membrane association region. Catalysis depends on charge relay system residues His-189 and Asp-193. The segment at 515 to 532 (RGEWESFCKLFYQTIGEF) is membrane association.

It belongs to the ATF1 alcohol acetyltransferase family.

The protein resides in the lipid droplet. The protein localises to the endoplasmic reticulum membrane. The enzyme catalyses an aliphatic alcohol + acetyl-CoA = an acetyl ester + CoA. Can use acetyl-CoA to synthesize acetate esters from various alcohols, producing ethyl acetate, isoamyl acetate, isobutyl acetate, butyl acetate, hexyl acetate, heptyl acetate and octyl acetate. ATF2 seems to play only a minor role in the acetate ester synthesis, compared to ATF1. Plays an active role in the detoxification hydroxysteroids and possibly certain phytochemicals, in association with the efflux pumps PDR5 and SNQ2. The chain is Alcohol O-acetyltransferase 2 from Saccharomyces cerevisiae (strain ATCC 204508 / S288c) (Baker's yeast).